The primary structure comprises 913 residues: Bifunctional uridylyltransferase/uridylyl-removing enzyme (913 aa).

The interval 1–358 (MFNCDVTAID…PDEERPKKQP (358 aa)) is uridylyltransferase. A uridylyl-removing region spans residues 359–729 (INARFNQVGD…EHRELALDAV (371 aa)). Positions 476–592 (VDAHTLFLIR…TLFADLVGNV (117 aa)) constitute an HD domain. 2 consecutive ACT domains span residues 730–815 (QVFV…RIPR) and 838–913 (IMSL…NDRV).

Belongs to the GlnD family. Mg(2+) serves as cofactor.

It catalyses the reaction [protein-PII]-L-tyrosine + UTP = [protein-PII]-uridylyl-L-tyrosine + diphosphate. The enzyme catalyses [protein-PII]-uridylyl-L-tyrosine + H2O = [protein-PII]-L-tyrosine + UMP + H(+). Its activity is regulated as follows. Uridylyltransferase (UTase) activity is inhibited by glutamine, while glutamine activates uridylyl-removing (UR) activity. Functionally, modifies, by uridylylation and deuridylylation, the PII regulatory proteins (GlnB and homologs), in response to the nitrogen status of the cell that GlnD senses through the glutamine level. Under low glutamine levels, catalyzes the conversion of the PII proteins and UTP to PII-UMP and PPi, while under higher glutamine levels, GlnD hydrolyzes PII-UMP to PII and UMP (deuridylylation). Thus, controls uridylylation state and activity of the PII proteins, and plays an important role in the regulation of nitrogen assimilation and metabolism. This chain is Bifunctional uridylyltransferase/uridylyl-removing enzyme, found in Psychrobacter cryohalolentis (strain ATCC BAA-1226 / DSM 17306 / VKM B-2378 / K5).